The following is a 248-amino-acid chain: Phosphomannomutase (248 aa).

Asp-14 serves as the catalytic Nucleophile. 2 residues coordinate Mg(2+): Asp-14 and Asp-16. The Proton donor/acceptor role is filled by Asp-16. Residues Arg-23, Arg-125, Arg-136, Arg-143, Ser-181, and Asp-183 each contribute to the alpha-D-mannose 1-phosphate site. Residues Asp-209, Phe-221, and Thr-226 each coordinate Mg(2+).

It belongs to the eukaryotic PMM family. In terms of assembly, homodimer. The cofactor is Mg(2+).

The protein localises to the cytoplasm. The catalysed reaction is alpha-D-mannose 1-phosphate = D-mannose 6-phosphate. Its pathway is nucleotide-sugar biosynthesis; GDP-alpha-D-mannose biosynthesis; alpha-D-mannose 1-phosphate from D-fructose 6-phosphate: step 2/2. In terms of biological role, catalyzes the interconversion of mannose-6-phosphate to mannose-1-phosphate, the precursor for the synthesis of GDP-mannose. GDP-mannose is an essential sugar nucleotide for the synthesis of D-mannose-containing cell wall polysaccharides (galactomannans and glucomannans), glycolipids, glycoproteins and the antioxidant L-ascorbate. The sequence is that of Phosphomannomutase from Oryza sativa subsp. indica (Rice).